Consider the following 545-residue polypeptide: MAGQGSQMKKYCDCCKRYVDHSNGKMKCFHRQMSANFEHSMIIPNKFLDQFGGKISRTVELESPKGNVYVVKVSKHMNKTVLQCGWEAFVDAHQIEENDSLLFRHIKNSRRASGVQERNADPIDVSSSTHDDTVQSSGGERFARSESGSDSQHSKTAKLAATCSSGGSECTGEEAKESSSSEHESSYDLVDPQIAPMPGYVLSRGTNLSQAHEEKLDMLVQEIRPEIPLYVTTMKHSNVNSHHASLVIAKHYACAYFPHTSQTITLKWHGKNRKWHPKFYIRKDQVGYILHGRWIDFVRHNHVKEGDICIFHLKNFNGRKFRATVHLLRETIPHSFGALHIPKRFESRNGRMRLKMTDDRRVSSTECRRGTMEPSTTNVKKEADNEQCNNGQGKRQEPLNFDVSVGSSKPYLTADRVSLTEEQFMKVEENVHSIQSEGPIYVSIMNKSNVGTDGLYIITLGRQFAIRYLPEGEQTLTLLTTGTGKAWQVKMRPRSGDARMFTLGWRDFVRDNRLQTEDICLFQLTKNSERGLAMKVHIIRHNERS.

The TF-B3 1 DNA-binding region spans 26–119 (MKCFHRQMSA…RRASGVQERN (94 aa)). The segment at 111–188 (RASGVQERNA…SSSEHESSYD (78 aa)) is disordered. The span at 173 to 186 (EEAKESSSSEHESS) shows a compositional bias: basic and acidic residues. The TF-B3 2 DNA-binding region spans 231–331 (VTTMKHSNVN…RATVHLLRET (101 aa)). The segment at 368 to 400 (RRGTMEPSTTNVKKEADNEQCNNGQGKRQEPLN) is disordered. The segment at residues 441–542 (YVSIMNKSNV…AMKVHIIRHN (102 aa)) is a DNA-binding region (TF-B3 3).

It localises to the nucleus. The chain is B3 domain-containing protein Os03g0620500 from Oryza sativa subsp. japonica (Rice).